Here is a 185-residue protein sequence, read N- to C-terminus: Ribosome-recycling factor (185 aa).

Belongs to the RRF family.

The protein resides in the cytoplasm. In terms of biological role, responsible for the release of ribosomes from messenger RNA at the termination of protein biosynthesis. May increase the efficiency of translation by recycling ribosomes from one round of translation to another. The protein is Ribosome-recycling factor of Thermomicrobium roseum (strain ATCC 27502 / DSM 5159 / P-2).